The sequence spans 190 residues: MIRNFVISLRSTALLWILTALIYPAIVLVIGQLVFPYQANGSLITDSQGQVVGSALIGQTFTEEGYFWSRPSAINYSEGADASPTGISGASNLAPSNPDLLSRIEAEAQRLEDNAVQPTADLLYSSGSGLDPHISPAAAQAQFDRVAKARSIPPQELQSLITKHTEGRFLGIFGEPGVNVLTLNLALDNR.

The chain crosses the membrane as a helical span at residues 15-35 (LWILTALIYPAIVLVIGQLVF).

The protein belongs to the KdpC family. In terms of assembly, the system is composed of three essential subunits: KdpA, KdpB and KdpC.

The protein resides in the cell inner membrane. Part of the high-affinity ATP-driven potassium transport (or Kdp) system, which catalyzes the hydrolysis of ATP coupled with the electrogenic transport of potassium into the cytoplasm. This subunit acts as a catalytic chaperone that increases the ATP-binding affinity of the ATP-hydrolyzing subunit KdpB by the formation of a transient KdpB/KdpC/ATP ternary complex. The sequence is that of Potassium-transporting ATPase KdpC subunit from Synechocystis sp. (strain ATCC 27184 / PCC 6803 / Kazusa).